Consider the following 90-residue polypeptide: Probable Fe(2+)-trafficking protein (90 aa).

It belongs to the Fe(2+)-trafficking protein family.

Could be a mediator in iron transactions between iron acquisition and iron-requiring processes, such as synthesis and/or repair of Fe-S clusters in biosynthetic enzymes. The sequence is that of Probable Fe(2+)-trafficking protein from Xylella fastidiosa (strain M23).